The following is a 403-amino-acid chain: Heptahelical transmembrane protein ADIPOR3 (403 aa).

Topologically, residues 1–73 (MAAAAGEEVE…LSAFSIHNET (73 aa)) are cytoplasmic. The helical transmembrane segment at 74–94 (LNVWTHLIGFFIFLVLTIYTA) threads the bilayer. Residues 95 to 209 (TQVPNVVDLQ…QLIRPIPRWP (115 aa)) are Extracellular-facing. The helical transmembrane segment at 210–230 (FYAFLGGAMFCLLASSTCHLL) threads the bilayer. At 231–246 (SCHSRRLAYIMLRLDY) the chain is on the cytoplasmic side. Residues 247–267 (AGIAALIATSFYPPVYYSFMC) traverse the membrane as a helical segment. Residues 268 to 274 (YPFFCNL) are Extracellular-facing. Residues 275–295 (YLSCITILGVATIAFSLLPVF) traverse the membrane as a helical segment. At 296 to 306 (QNPEFRTIRAC) the chain is on the cytoplasmic side. A helical membrane pass occupies residues 307 to 327 (LFFGMGASGVIPVIHKLILFW). Residues 328 to 331 (HQPE) are Extracellular-facing. Residues 332 to 352 (ALHTTAYEVLMGLFYGIGALV) traverse the membrane as a helical segment. The Cytoplasmic portion of the chain corresponds to 353 to 374 (YATRVPERWMPGKFDIAGHSHQ). A helical membrane pass occupies residues 375–395 (LFHVLVVAGAYTHYHSGLVYL). Topologically, residues 396–403 (KWRDVQGC) are extracellular.

The protein belongs to the ADIPOR family.

The protein localises to the membrane. Its function is as follows. May play a role in abiotic stress response. The chain is Heptahelical transmembrane protein ADIPOR3 (ADIPOR3) from Oryza sativa subsp. japonica (Rice).